A 200-amino-acid polypeptide reads, in one-letter code: 2,3-bisphosphoglycerate-dependent phosphoglycerate mutase (200 aa).

His-9 (tele-phosphohistidine intermediate) is an active-site residue. His-142 is an active-site residue.

This sequence belongs to the phosphoglycerate mutase family. In terms of assembly, homodimer.

The catalysed reaction is (2R)-2-phosphoglycerate = (2R)-3-phosphoglycerate. It functions in the pathway carbohydrate degradation; glycolysis; pyruvate from D-glyceraldehyde 3-phosphate: step 3/5. Its function is as follows. Catalyzes the interconversion of 2-phosphoglycerate and 3-phosphoglycerate. The chain is 2,3-bisphosphoglycerate-dependent phosphoglycerate mutase from Thermoplasma acidophilum (strain ATCC 25905 / DSM 1728 / JCM 9062 / NBRC 15155 / AMRC-C165).